Here is a 193-residue protein sequence, read N- to C-terminus: Xanthine phosphoribosyltransferase (193 aa).

2 residues coordinate xanthine: Leu20 and Thr27. 5-phospho-alpha-D-ribose 1-diphosphate is bound at residue 128–132 (ANGQA). Residue Lys156 participates in xanthine binding.

The protein belongs to the purine/pyrimidine phosphoribosyltransferase family. Xpt subfamily. In terms of assembly, homodimer.

Its subcellular location is the cytoplasm. The catalysed reaction is XMP + diphosphate = xanthine + 5-phospho-alpha-D-ribose 1-diphosphate. The protein operates within purine metabolism; XMP biosynthesis via salvage pathway; XMP from xanthine: step 1/1. In terms of biological role, converts the preformed base xanthine, a product of nucleic acid breakdown, to xanthosine 5'-monophosphate (XMP), so it can be reused for RNA or DNA synthesis. The polypeptide is Xanthine phosphoribosyltransferase (Streptococcus pneumoniae serotype 2 (strain D39 / NCTC 7466)).